A 270-amino-acid polypeptide reads, in one-letter code: Putative envelope-preserving system protein Rv2743c (270 aa).

2 helical membrane passes run 50-72 (ALRW…ALLA) and 77-99 (FTSL…TLLL).

In terms of assembly, interacts with PspA and Rv2742c.

It localises to the membrane. In terms of biological role, involved in preservation of envelope integrity and tolerance to surface stress. Reverses the inhibitory effect of PspA on ClgR activity. Facilitates intracellular growth of M.tuberculosis. This is Putative envelope-preserving system protein Rv2743c from Mycobacterium tuberculosis (strain ATCC 25618 / H37Rv).